Here is a 201-residue protein sequence, read N- to C-terminus: UPF0637 protein LCA_0842 (201 aa).

It belongs to the UPF0637 family.

The polypeptide is UPF0637 protein LCA_0842 (Latilactobacillus sakei subsp. sakei (strain 23K) (Lactobacillus sakei subsp. sakei)).